Here is a 56-residue protein sequence, read N- to C-terminus: Large ribosomal subunit protein bL33 (56 aa).

Basic and acidic residues predominate over residues 1–12 (MATKGGRDKIKL). The tract at residues 1–24 (MATKGGRDKIKLESTAGTGHFYTT) is disordered. The span at 15-24 (TAGTGHFYTT) shows a compositional bias: polar residues.

The protein belongs to the bacterial ribosomal protein bL33 family.

This is Large ribosomal subunit protein bL33 from Paracidovorax citrulli (strain AAC00-1) (Acidovorax citrulli).